The primary structure comprises 87 residues: Omega-lycotoxin-Am1a (87 aa).

Residues 1-17 form the signal peptide; the sequence is MKLSIFFVLFFIAIAYC. Positions 18–40 are excised as a propeptide; sequence QPEFLDDEEDEVEETLPVAEEGR. 4 disulfide bridges follow: Cys44–Cys59, Cys51–Cys64, Cys58–Cys84, and Cys66–Cys82.

This sequence belongs to the neurotoxin omega-lctx family. In terms of tissue distribution, expressed by the venom gland.

The protein resides in the secreted. Modulates Cav2.1/CACNA1A voltage-gated calcium channels (P/Q-type currents) in rat cerebellar Purkinje cells and hippocampal CA1-CA3 neurons. At saturating concentrations (&gt;10 nM) decelerates activation kinetics and slightly increases peak amplitude without affecting deactivation kinetics. In vivo, does not cause death when intravenously injected into mice. In rat models, through its activity on Cav2.1/CACNA1A, has an ameliorative effect on memory defects provoked by hyperstimulation of N-methyl-D-aspartate receptors (NMDARs) in the hippocampus. The chain is Omega-lycotoxin-Am1a from Alopecosa marikovskyi (Wolf spider).